A 352-amino-acid chain; its full sequence is Phosphoribosylformylglycinamidine cyclo-ligase (352 aa).

It belongs to the AIR synthase family.

It is found in the cytoplasm. It catalyses the reaction 2-formamido-N(1)-(5-O-phospho-beta-D-ribosyl)acetamidine + ATP = 5-amino-1-(5-phospho-beta-D-ribosyl)imidazole + ADP + phosphate + H(+). The protein operates within purine metabolism; IMP biosynthesis via de novo pathway; 5-amino-1-(5-phospho-D-ribosyl)imidazole from N(2)-formyl-N(1)-(5-phospho-D-ribosyl)glycinamide: step 2/2. This Pseudomonas fluorescens (strain ATCC BAA-477 / NRRL B-23932 / Pf-5) protein is Phosphoribosylformylglycinamidine cyclo-ligase.